A 149-amino-acid polypeptide reads, in one-letter code: D-aminoacyl-tRNA deacylase (149 aa).

Positions 137–138 match the Gly-cisPro motif, important for rejection of L-amino acids motif; the sequence is GP.

Belongs to the DTD family. As to quaternary structure, homodimer.

It localises to the cytoplasm. It carries out the reaction glycyl-tRNA(Ala) + H2O = tRNA(Ala) + glycine + H(+). The enzyme catalyses a D-aminoacyl-tRNA + H2O = a tRNA + a D-alpha-amino acid + H(+). An aminoacyl-tRNA editing enzyme that deacylates mischarged D-aminoacyl-tRNAs. Also deacylates mischarged glycyl-tRNA(Ala), protecting cells against glycine mischarging by AlaRS. Acts via tRNA-based rather than protein-based catalysis; rejects L-amino acids rather than detecting D-amino acids in the active site. By recycling D-aminoacyl-tRNA to D-amino acids and free tRNA molecules, this enzyme counteracts the toxicity associated with the formation of D-aminoacyl-tRNA entities in vivo and helps enforce protein L-homochirality. The chain is D-aminoacyl-tRNA deacylase from Paracoccus denitrificans (strain Pd 1222).